Consider the following 438-residue polypeptide: Exoglucanase 3 (438 aa).

The N-terminal stretch at 1 to 20 is a signal peptide; it reads MFKFAALLALASLVPGFVQA. Residues 21 to 59 form the CBM1 domain; the sequence is QSPVWGQCGGNGWTGPTTCASGSTCVKQNDFYSQCLPNN. 2 disulfide bridges follow: C28/C45 and C39/C55. The disordered stretch occupies residues 57 to 90; sequence PNNQAPPSTTTQPGTTPPATTTSGGTGPTSGAGN. A linker region spans residues 60 to 87; sequence QAPPSTTTQPGTTPPATTTSGGTGPTSG. Residues 61 to 79 are compositionally biased toward low complexity; that stretch reads APPSTTTQPGTTPPATTTS. The segment at 88–438 is catalytic; sequence AGNPYTGKTV…TLVANANPAL (351 aa). Disulfide bonds link C170/C229 and C360/C407. D215 serves as the catalytic Proton donor. The active-site Nucleophile is D393.

The protein belongs to the glycosyl hydrolase 6 (cellulase B) family.

It catalyses the reaction Hydrolysis of (1-&gt;4)-beta-D-glucosidic linkages in cellulose and cellotetraose, releasing cellobiose from the non-reducing ends of the chains.. Its function is as follows. Shows enzymatic activity towards crystalline cellulose. At long reaction times. It is also able to degrade carboxymethyl cellulose and barley B-glucan. The sequence is that of Exoglucanase 3 (cel3) from Agaricus bisporus (White button mushroom).